The sequence spans 94 residues: Pyrimidine/purine nucleoside phosphorylase (94 aa).

The protein belongs to the nucleoside phosphorylase PpnP family.

It catalyses the reaction a purine D-ribonucleoside + phosphate = a purine nucleobase + alpha-D-ribose 1-phosphate. The enzyme catalyses adenosine + phosphate = alpha-D-ribose 1-phosphate + adenine. It carries out the reaction cytidine + phosphate = cytosine + alpha-D-ribose 1-phosphate. The catalysed reaction is guanosine + phosphate = alpha-D-ribose 1-phosphate + guanine. It catalyses the reaction inosine + phosphate = alpha-D-ribose 1-phosphate + hypoxanthine. The enzyme catalyses thymidine + phosphate = 2-deoxy-alpha-D-ribose 1-phosphate + thymine. It carries out the reaction uridine + phosphate = alpha-D-ribose 1-phosphate + uracil. The catalysed reaction is xanthosine + phosphate = alpha-D-ribose 1-phosphate + xanthine. Functionally, catalyzes the phosphorolysis of diverse nucleosides, yielding D-ribose 1-phosphate and the respective free bases. Can use uridine, adenosine, guanosine, cytidine, thymidine, inosine and xanthosine as substrates. Also catalyzes the reverse reactions. The chain is Pyrimidine/purine nucleoside phosphorylase from Salmonella paratyphi C (strain RKS4594).